The following is a 100-amino-acid chain: ATP synthase subunit c (100 aa).

2 helical membrane-spanning segments follow: residues 27-47 and 72-92; these read SVIA…IGMG and FIAL…TLIV.

This sequence belongs to the ATPase C chain family. F-type ATPases have 2 components, F(1) - the catalytic core - and F(0) - the membrane proton channel. F(1) has five subunits: alpha(3), beta(3), gamma(1), delta(1), epsilon(1). F(0) has three main subunits: a(1), b(2) and c(10-14). The alpha and beta chains form an alternating ring which encloses part of the gamma chain. F(1) is attached to F(0) by a central stalk formed by the gamma and epsilon chains, while a peripheral stalk is formed by the delta and b chains.

Its subcellular location is the cell inner membrane. In terms of biological role, f(1)F(0) ATP synthase produces ATP from ADP in the presence of a proton or sodium gradient. F-type ATPases consist of two structural domains, F(1) containing the extramembraneous catalytic core and F(0) containing the membrane proton channel, linked together by a central stalk and a peripheral stalk. During catalysis, ATP synthesis in the catalytic domain of F(1) is coupled via a rotary mechanism of the central stalk subunits to proton translocation. In Campylobacter curvus (strain 525.92), this protein is ATP synthase subunit c.